We begin with the raw amino-acid sequence, 365 residues long: Nudix hydrolase 24, chloroplastic (365 aa).

A chloroplast-targeting transit peptide spans 1–30 (MASAFCSLCPTPTSLFSSHALIPTLQWRSS). The Nudix hydrolase domain occupies 196–337 (GYAIHVNGYV…KDSCSLVIID (142 aa)). The short motif at 235–256 (GGLPHGISVCENLVKECEEEAG) is the Nudix box element. Mg(2+)-binding residues include E250 and E254.

Belongs to the Nudix hydrolase family. It depends on Mg(2+) as a cofactor. Mn(2+) is required as a cofactor. As to expression, expressed in leaves.

The protein resides in the plastid. Its subcellular location is the chloroplast. Probably mediates the hydrolysis of some nucleoside diphosphate derivatives. This Arabidopsis thaliana (Mouse-ear cress) protein is Nudix hydrolase 24, chloroplastic (NUDT24).